Consider the following 331-residue polypeptide: Histone-lysine N-methyltransferase, H3 lysine-9 specific dim-5 (331 aa).

The Pre-SET domain occupies 77–159 (VGCSCASDEE…DCPNRVVERG (83 aa)). Positions 79, 81, 87, 92, 94, 141, 145, 147, and 151 each coordinate Zn(2+). One can recognise an SET domain in the interval 162 to 297 (VPLQIFRTKD…KGTELTFDYV (136 aa)). S-adenosyl-L-methionine contacts are provided by residues 172–174 (RGW), Asp-215, Tyr-217, Arg-251, and 254–255 (NH). Cys-257, Cys-319, Cys-321, and Cys-326 together coordinate Zn(2+). Residues 315–331 (EMTKCLCGTAKCRGYLW) form the Post-SET domain.

Belongs to the class V-like SAM-binding methyltransferase superfamily. Histone-lysine methyltransferase family. Suvar3-9 subfamily.

The protein resides in the nucleus. The protein localises to the chromosome. The catalysed reaction is L-lysyl(9)-[histone H3] + 3 S-adenosyl-L-methionine = N(6),N(6),N(6)-trimethyl-L-lysyl(9)-[histone H3] + 3 S-adenosyl-L-homocysteine + 3 H(+). Histone methyltransferase that specifically trimethylates histone H3 to form H3K9me3. H3K9me3 marks chromatin regions for DNA methylation. Dim-5 recognizes Arg-8 to Gly-12 of the H3 tail with Thr-11 and Gly-12 being the most important specificity determinants, the recognition of whcih is important to distinguish H3K9 from H3K27 and H4K20. This is Histone-lysine N-methyltransferase, H3 lysine-9 specific dim-5 (dim-5) from Neurospora crassa (strain ATCC 24698 / 74-OR23-1A / CBS 708.71 / DSM 1257 / FGSC 987).